Reading from the N-terminus, the 231-residue chain is Cytochrome c oxidase subunit 2 (231 aa).

At methionine 1 to serine 14 the chain is on the mitochondrial intermembrane side. The chain crosses the membrane as a helical span at residues proline 15–methionine 45. Over leucine 46 to glutamine 59 the chain is Mitochondrial matrix. A helical membrane pass occupies residues glutamate 60–threonine 87. Residues aspartate 88 to leucine 231 lie on the Mitochondrial intermembrane side of the membrane. Histidine 161, cysteine 196, glutamate 198, cysteine 200, histidine 204, and methionine 207 together coordinate Cu cation. Glutamate 198 provides a ligand contact to Mg(2+).

Belongs to the cytochrome c oxidase subunit 2 family. In terms of assembly, component of the cytochrome c oxidase (complex IV, CIV), a multisubunit enzyme composed of 14 subunits. The complex is composed of a catalytic core of 3 subunits MT-CO1, MT-CO2 and MT-CO3, encoded in the mitochondrial DNA, and 11 supernumerary subunits COX4I, COX5A, COX5B, COX6A, COX6B, COX6C, COX7A, COX7B, COX7C, COX8 and NDUFA4, which are encoded in the nuclear genome. The complex exists as a monomer or a dimer and forms supercomplexes (SCs) in the inner mitochondrial membrane with NADH-ubiquinone oxidoreductase (complex I, CI) and ubiquinol-cytochrome c oxidoreductase (cytochrome b-c1 complex, complex III, CIII), resulting in different assemblies (supercomplex SCI(1)III(2)IV(1) and megacomplex MCI(2)III(2)IV(2)). Found in a complex with TMEM177, COA6, COX18, COX20, SCO1 and SCO2. Interacts with TMEM177 in a COX20-dependent manner. Interacts with COX20. Interacts with COX16. It depends on Cu cation as a cofactor.

It localises to the mitochondrion inner membrane. It carries out the reaction 4 Fe(II)-[cytochrome c] + O2 + 8 H(+)(in) = 4 Fe(III)-[cytochrome c] + 2 H2O + 4 H(+)(out). Its function is as follows. Component of the cytochrome c oxidase, the last enzyme in the mitochondrial electron transport chain which drives oxidative phosphorylation. The respiratory chain contains 3 multisubunit complexes succinate dehydrogenase (complex II, CII), ubiquinol-cytochrome c oxidoreductase (cytochrome b-c1 complex, complex III, CIII) and cytochrome c oxidase (complex IV, CIV), that cooperate to transfer electrons derived from NADH and succinate to molecular oxygen, creating an electrochemical gradient over the inner membrane that drives transmembrane transport and the ATP synthase. Cytochrome c oxidase is the component of the respiratory chain that catalyzes the reduction of oxygen to water. Electrons originating from reduced cytochrome c in the intermembrane space (IMS) are transferred via the dinuclear copper A center (CU(A)) of subunit 2 and heme A of subunit 1 to the active site in subunit 1, a binuclear center (BNC) formed by heme A3 and copper B (CU(B)). The BNC reduces molecular oxygen to 2 water molecules using 4 electrons from cytochrome c in the IMS and 4 protons from the mitochondrial matrix. The sequence is that of Cytochrome c oxidase subunit 2 (MT-CO2) from Brachyteles hypoxanthus (Northern muriqui).